The chain runs to 644 residues: Putative aldehyde dehydrogenase-like protein YHR039C (644 aa).

The N-linked (GlcNAc...) asparagine glycan is linked to Asn-15. Glu-354 (proton acceptor) is an active-site residue. Residue Cys-389 is the Nucleophile of the active site. 2 N-linked (GlcNAc...) asparagine glycosylation sites follow: Asn-565 and Asn-627.

Belongs to the aldehyde dehydrogenase family. In terms of processing, N-glycosylated.

It is found in the endoplasmic reticulum. The chain is Putative aldehyde dehydrogenase-like protein YHR039C (MSC7) from Saccharomyces cerevisiae (strain ATCC 204508 / S288c) (Baker's yeast).